The primary structure comprises 636 residues: Alpha-L-iduronidase (636 aa).

The first 16 residues, 1–16 (MLSLLLVLTTLARIHA), serve as a signal peptide directing secretion. Alpha-D-mannopyranose is bound by residues Pro39, Ile43, and His45. Residues His78, Asn169, and Glu170 each coordinate alpha-L-iduronate. The active-site Proton donor is the Glu170. An N-linked (GlcNAc...) asparagine glycan is attached at Asn180. Lys257 lines the alpha-L-iduronate pocket. Asn268 carries an N-linked (GlcNAc...) asparagine glycan. The alpha-L-iduronate site is built by Glu293 and Gly299. Catalysis depends on Glu293, which acts as the Nucleophile. Position 300 (Trp300) interacts with alpha-D-mannopyranose. Alpha-L-iduronate is bound by residues Asp342 and Arg356. Residues Asn365, Asn448, Asn453, and Asn483 are each glycosylated (N-linked (GlcNAc...) asparagine). A disulfide bridge connects residues Cys529 and Cys565. An N-linked (GlcNAc...) asparagine glycan is attached at Asn622.

Belongs to the glycosyl hydrolase 39 family.

It is found in the lysosome. The enzyme catalyses Hydrolysis of unsulfated alpha-L-iduronosidic linkages in dermatan sulfate.. In terms of biological role, essential lysosomal hydrolase responsible for the degradation of glycosaminoglycans (GAG) such as heparan sulfate. Required for lysosome function and autophagy. Consequently, has an essential role in the development, maintenance and function of various cells, tissues, and organs, including the muscles and the central nervous system (CNS). This Drosophila melanogaster (Fruit fly) protein is Alpha-L-iduronidase.